Reading from the N-terminus, the 132-residue chain is ATP synthase epsilon chain, chloroplastic (132 aa).

The protein belongs to the ATPase epsilon chain family. F-type ATPases have 2 components, CF(1) - the catalytic core - and CF(0) - the membrane proton channel. CF(1) has five subunits: alpha(3), beta(3), gamma(1), delta(1), epsilon(1). CF(0) has three main subunits: a, b and c.

The protein resides in the plastid. It is found in the chloroplast thylakoid membrane. Its function is as follows. Produces ATP from ADP in the presence of a proton gradient across the membrane. The protein is ATP synthase epsilon chain, chloroplastic of Pylaiella littoralis (Seaweed).